A 640-amino-acid chain; its full sequence is WW domain-binding protein 11 (640 aa).

The segment covering 1 to 11 (MGRRSTSSTKS) has biased composition (polar residues). A disordered region spans residues 1–37 (MGRRSTSSTKSGKFMNPTDQARKEARKRELKKNKKQR). The segment covering 28-37 (RELKKNKKQR) has biased composition (basic residues). Residues 75–122 (EKVLRDKRKKLRETFERIVRLYERENPETYKELRKLELEYETKRGQLS) adopt a coiled-coil conformation. Disordered stretches follow at residues 155–174 (DIPL…SALG), 187–563 (VPRL…ISAK), and 582–625 (RVRR…LKTK). Residues 194-207 (RKPPGPPPGPPPPQ) are compositionally biased toward pro residues. Residues 230–240 (DGGRDSDSKSE) are compositionally biased toward basic and acidic residues. The segment covering 241–251 (ADEESDSQEDS) has biased composition (acidic residues). Basic and acidic residues predominate over residues 252–274 (SAEREDSDRGERDEERERADKHT). Residue S285 is modified to Phosphoserine. Positions 315-338 (PEEEEEDEEEEYSESEDSEAEDQA) are enriched in acidic residues. Residues 356-371 (APMAAQQPPSLMQAPP) are compositionally biased toward low complexity. Pro residues-rich tracts occupy residues 372-412 (ITGP…PPGL) and 422-491 (RLLP…PPLN). The short motif at 421–432 (PRLLPPGPPPGR) is the PGR element. The segment covering 547 to 558 (GSGGASAQGGGA) has biased composition (gly residues). The segment covering 586-599 (DRAGGTGRREEERP) has biased composition (basic and acidic residues). The segment covering 603 to 616 (QQTPAHQAPPIAHA) has biased composition (low complexity).

It is found in the cytoplasm. The protein localises to the nucleus. Activates pre-mRNA splicing. This is WW domain-binding protein 11 (wbp11) from Danio rerio (Zebrafish).